A 306-amino-acid polypeptide reads, in one-letter code: Protein farnesyltransferase/geranylgeranyltransferase type-1 subunit alpha (306 aa).

5 PFTA repeats span residues 48-82 (YSER…NLPN), 84-118 (NLYD…QIME), 125-159 (DPYR…TFDL), 161-195 (NDAK…SKKH), and 201-235 (TIDE…RFDR).

Belongs to the protein prenyltransferase subunit alpha family. In terms of assembly, heterodimer of an alpha and a beta subunit. Requires Mg(2+) as cofactor.

The catalysed reaction is L-cysteinyl-[protein] + (2E,6E)-farnesyl diphosphate = S-(2E,6E)-farnesyl-L-cysteinyl-[protein] + diphosphate. It catalyses the reaction geranylgeranyl diphosphate + L-cysteinyl-[protein] = S-geranylgeranyl-L-cysteinyl-[protein] + diphosphate. Essential subunit of both the farnesyltransferase and the geranylgeranyltransferase complex. Contributes to the transfer of a farnesyl or geranylgeranyl moiety from farnesyl or geranylgeranyl diphosphate to a cysteine at the fourth position from the C-terminus of several proteins having the C-terminal sequence Cys-aliphatic-aliphatic-X. In Candida albicans (Yeast), this protein is Protein farnesyltransferase/geranylgeranyltransferase type-1 subunit alpha (RAM2).